The following is a 153-amino-acid chain: Large ribosomal subunit protein bL9 (153 aa).

The protein belongs to the bacterial ribosomal protein bL9 family.

Functionally, binds to the 23S rRNA. This is Large ribosomal subunit protein bL9 from Blochmanniella pennsylvanica (strain BPEN).